Consider the following 663-residue polypeptide: UvrABC system protein B (663 aa).

The segment covering 1 to 10 (MIDKRDDKPF) has biased composition (basic and acidic residues). A disordered region spans residues 1–23 (MIDKRDDKPFKLKSKYKPSGDQP). The region spanning 31–271 (DNIEGGEKAQ…EQSIAKIQAE (241 aa)) is the Helicase ATP-binding domain. ATP is bound at residue 44–51 (GATGTGKT). Positions 97-120 (YYDYYQPEAYVPSSDTYIEKDSSV) match the Beta-hairpin motif. Residues 435-601 (QIDDLLGEIN…TIKKDIRGLI (167 aa)) form the Helicase C-terminal domain. The region spanning 627-662 (KEAINALQKQMQEAAELLDFELAAQMRDLILELKLM) is the UVR domain.

The protein belongs to the UvrB family. In terms of assembly, forms a heterotetramer with UvrA during the search for lesions. Interacts with UvrC in an incision complex.

It is found in the cytoplasm. Functionally, the UvrABC repair system catalyzes the recognition and processing of DNA lesions. A damage recognition complex composed of 2 UvrA and 2 UvrB subunits scans DNA for abnormalities. Upon binding of the UvrA(2)B(2) complex to a putative damaged site, the DNA wraps around one UvrB monomer. DNA wrap is dependent on ATP binding by UvrB and probably causes local melting of the DNA helix, facilitating insertion of UvrB beta-hairpin between the DNA strands. Then UvrB probes one DNA strand for the presence of a lesion. If a lesion is found the UvrA subunits dissociate and the UvrB-DNA preincision complex is formed. This complex is subsequently bound by UvrC and the second UvrB is released. If no lesion is found, the DNA wraps around the other UvrB subunit that will check the other stand for damage. The sequence is that of UvrABC system protein B from Streptococcus pyogenes serotype M5 (strain Manfredo).